We begin with the raw amino-acid sequence, 338 residues long: Phosphatidylglycerol--prolipoprotein diacylglyceryl transferase (338 aa).

Helical transmembrane passes span Trp24 to Val44, Leu67 to Tyr87, Gly115 to Trp135, and Phe141 to Gly161. Residue Arg162 coordinates a 1,2-diacyl-sn-glycero-3-phospho-(1'-sn-glycerol). A run of 3 helical transmembrane segments spans residues Pro224–Leu244, Gly252–Phe272, and Gly304–Leu324.

Belongs to the Lgt family.

It is found in the cell inner membrane. The enzyme catalyses L-cysteinyl-[prolipoprotein] + a 1,2-diacyl-sn-glycero-3-phospho-(1'-sn-glycerol) = an S-1,2-diacyl-sn-glyceryl-L-cysteinyl-[prolipoprotein] + sn-glycerol 1-phosphate + H(+). Its pathway is protein modification; lipoprotein biosynthesis (diacylglyceryl transfer). Its function is as follows. Catalyzes the transfer of the diacylglyceryl group from phosphatidylglycerol to the sulfhydryl group of the N-terminal cysteine of a prolipoprotein, the first step in the formation of mature lipoproteins. This chain is Phosphatidylglycerol--prolipoprotein diacylglyceryl transferase, found in Treponema denticola (strain ATCC 35405 / DSM 14222 / CIP 103919 / JCM 8153 / KCTC 15104).